Reading from the N-terminus, the 194-residue chain is Extracellular globin-E1 (194 aa).

Globin domains follow at residues 1–45 and 55–194; these read DISH…MGLS and GLSG…LRQA. Residue His150 participates in heme b binding.

This sequence belongs to the globin family. In terms of assembly, artemia hemoglobin is a dimer of two similar sized subunits. Each subunit represents a globin chain which exists in two forms (alpha and beta), thus making possible three different phenotypes (HB1, alpha(2), HB2, alpha/beta, HB3, beta(2)). The globin chain is a polymer of eight heme-binding covalently linked domains.

The polypeptide is Extracellular globin-E1 (Artemia sp. (Brine shrimp)).